Here is a 309-residue protein sequence, read N- to C-terminus: Elongation factor Ts, mitochondrial (309 aa).

This sequence belongs to the EF-Ts family.

Its subcellular location is the mitochondrion. Associates with the EF-Tu.GDP complex and induces the exchange of GDP to GTP. It remains bound to the aminoacyl-tRNA.EF-Tu.GTP complex up to the GTP hydrolysis stage on the ribosome. This chain is Elongation factor Ts, mitochondrial (tsfm), found in Salmo salar (Atlantic salmon).